Here is a 405-residue protein sequence, read N- to C-terminus: Tryptophan synthase beta chain (405 aa).

Residue lysine 95 is modified to N6-(pyridoxal phosphate)lysine.

This sequence belongs to the TrpB family. As to quaternary structure, tetramer of two alpha and two beta chains. Pyridoxal 5'-phosphate serves as cofactor.

The catalysed reaction is (1S,2R)-1-C-(indol-3-yl)glycerol 3-phosphate + L-serine = D-glyceraldehyde 3-phosphate + L-tryptophan + H2O. It functions in the pathway amino-acid biosynthesis; L-tryptophan biosynthesis; L-tryptophan from chorismate: step 5/5. In terms of biological role, the beta subunit is responsible for the synthesis of L-tryptophan from indole and L-serine. The polypeptide is Tryptophan synthase beta chain (Pseudomonas entomophila (strain L48)).